The chain runs to 360 residues: SPRY domain-containing SOCS box protein 3 (360 aa).

Residues 20–55 (RDQDARSPTLPAEEEAWGYDSDGQHSNSDSDTDLLH) form a disordered region. Residues 85-274 (LHTFHQIKSC…MKVIRSCCCR (190 aa)) enclose the B30.2/SPRY domain. Residues 264–315 (SMKVIRSCCCRTSLQYLCCARLRQLLPDSVDSLEVLPLPPGLKQVLGNKLGW) form the SOCS box domain. The interval 323–350 (RSNQHKGDTSATTSCGSDSDSSCTPGQD) is disordered. Residues 331–346 (TSATTSCGSDSDSSCT) show a composition bias toward low complexity.

Belongs to the SPSB family. As to quaternary structure, substrate-recognition component of the ECS(SPSB3) complex, composed of spsb3, cul5, elob, elob and rnf7/rbx2.

The protein resides in the nucleus. It participates in protein modification; protein ubiquitination. In terms of biological role, substrate-recognition component of a cullin-5-RING E3 ubiquitin-protein ligase complex (ECS complex, also named CRL5 complex), which mediates the ubiquitination and subsequent proteasomal degradation of target proteins. In Xenopus tropicalis (Western clawed frog), this protein is SPRY domain-containing SOCS box protein 3 (spsb3).